Here is a 508-residue protein sequence, read N- to C-terminus: MGSCCSCPDKDTVPDNHRNKFKVINVDDDGNELGSGIMELTDTELILYTRKRDSVKWHYLCLRRYGYDSNLFSFESGRRCQTGQGIFAFKCARAEELFNMLQEIMQNNSINVVEEPVVERNNHQTELEVPRTPRTPTTPGFAAQNLPNGYPRYPSFGDASSHPSSRHPSVGSARLPSVGEESTHPLLVAEEQVHTYVNTTGVQEERKNRTSVHVPLEARVSNAESSTPKEEPSSIEDRDPQILLEPEGVKFVLGPTPVQKQLMEKEKLEQLGRDQVSGSGANNTEWDTGYDSDERRDAPSVNKLVYENINGLSIPSASGVRRGRLTSTSTSDTQNINNSAQRRTALLNYENLPSLPPVWEARKLSRDEDDNLGPKTPSLNGYHNNLDPMHNYVNTENVTVPASAHKIEYSRRRDCTPTVFNFDIRRPSLEHRQLNYIQVDLEGGSDSDNPQTPKTPTTPLPQTPTRRTELYAVIDIERTAAMSNLQKALPRDDGTSRKTRHNSTDLPM.

The N-myristoyl glycine moiety is linked to residue G2. Residues 13-115 (VPDNHRNKFK…QNNSINVVEE (103 aa)) form the IRS-type PTB domain. Residues 122–131 (NHQTELEVPR) are compositionally biased toward basic and acidic residues. The disordered stretch occupies residues 122 to 180 (NHQTELEVPRTPRTPTTPGFAAQNLPNGYPRYPSFGDASSHPSSRHPSVGSARLPSVGE). S177 is subject to Phosphoserine. Position 196 is a phosphotyrosine; by FGFR1 (Y196). Disordered stretches follow at residues 200 to 243 (TGVQ…PQIL) and 270 to 297 (QLGR…ERRD). Phosphoserine is present on residues S211 and S221. Over residues 227 to 240 (TPKEEPSSIEDRDP) the composition is skewed to basic and acidic residues. Positions 276 to 286 (VSGSGANNTEW) are enriched in polar residues. Position 306 is a phosphotyrosine; by FGFR1 (Y306). A disordered region spans residues 315 to 338 (PSASGVRRGRLTSTSTSDTQNINN). The segment covering 325–338 (LTSTSTSDTQNINN) has biased composition (polar residues). Position 349 is a phosphotyrosine; by FGFR1 (Y349). The residue at position 365 (S365) is a Phosphoserine. A disordered region spans residues 366 to 385 (RDEDDNLGPKTPSLNGYHNN). 2 positions are modified to phosphotyrosine; by FGFR1: Y392 and Y436. A disordered region spans residues 441–467 (LEGGSDSDNPQTPKTPTTPLPQTPTRR). Phosphotyrosine; by FGFR1 is present on Y471. The segment at 483–508 (SNLQKALPRDDGTSRKTRHNSTDLPM) is disordered.

As to quaternary structure, part of a complex containing FRS2, GRB2, GAB1, PIK3R1 and SOS1. Part of a complex containing GRB2 and CBL. Identified in a complex containing FGFR4, NCAM1, CDH2, PLCG1, FRS2, SRC, SHC1, GAP43 and CTTN. Binds RET. Binds ALK, FGFR1, CKS2, MAPK1/ERK2, MAPK3/ERK1 and SRC. The tyrosine-phosphorylated protein binds the SH2 domains of GRB2 and PTPN11. Interacts with NTRK1, NTRK2 and NTRK3 (phosphorylated upon ligand-binding). Post-translationally, phosphorylated by ULK2 in vitro. Phosphorylated on tyrosine residues upon stimulation by NGF or FGF2. Phosphorylated on tyrosine residues by activated ALK and FGFR1. Phosphorylated on tyrosine residues upon activation of FGFR2 and FGFR3. Phosphorylated on threonine residues by MAP kinases; this inhibits tyrosine phosphorylation, and thereby down-regulates FRS2-mediated activation of MAP kinases. Ubiquitinated when tyrosine phosphorylated and in a complex with GRB2. The unphosphorylated form is not subject to ubiquitination. Highly expressed in heart, brain, spleen, lung, liver, skeletal muscle, kidney and testis.

The protein localises to the endomembrane system. Its function is as follows. Adapter protein that links activated FGR and NGF receptors to downstream signaling pathways. Plays an important role in the activation of MAP kinases and in the phosphorylation of PIK3R1, the regulatory subunit of phosphatidylinositol 3-kinase, in response to ligand-mediated activation of FGFR1. Modulates signaling via SHC1 by competing for a common binding site on NTRK1. The polypeptide is Fibroblast growth factor receptor substrate 2 (FRS2) (Homo sapiens (Human)).